The sequence spans 285 residues: Diaminopimelate epimerase (285 aa).

Residues asparagine 15 and asparagine 68 each coordinate substrate. Residue cysteine 77 is the Proton donor of the active site. Substrate is bound by residues glycine 78 to asparagine 79, asparagine 165, asparagine 201, and glutamate 219 to arginine 220. Residue cysteine 228 is the Proton acceptor of the active site. Glycine 229–threonine 230 provides a ligand contact to substrate.

The protein belongs to the diaminopimelate epimerase family. In terms of assembly, homodimer.

It localises to the cytoplasm. It carries out the reaction (2S,6S)-2,6-diaminopimelate = meso-2,6-diaminopimelate. Its pathway is amino-acid biosynthesis; L-lysine biosynthesis via DAP pathway; DL-2,6-diaminopimelate from LL-2,6-diaminopimelate: step 1/1. Its function is as follows. Catalyzes the stereoinversion of LL-2,6-diaminopimelate (L,L-DAP) to meso-diaminopimelate (meso-DAP), a precursor of L-lysine and an essential component of the bacterial peptidoglycan. This Synechococcus sp. (strain JA-2-3B'a(2-13)) (Cyanobacteria bacterium Yellowstone B-Prime) protein is Diaminopimelate epimerase.